A 314-amino-acid polypeptide reads, in one-letter code: Homoserine kinase (314 aa).

Residue 95-105 (PHSRGLGSSAS) coordinates ATP.

It belongs to the GHMP kinase family. Homoserine kinase subfamily.

The protein localises to the cytoplasm. The catalysed reaction is L-homoserine + ATP = O-phospho-L-homoserine + ADP + H(+). Its pathway is amino-acid biosynthesis; L-threonine biosynthesis; L-threonine from L-aspartate: step 4/5. In terms of biological role, catalyzes the ATP-dependent phosphorylation of L-homoserine to L-homoserine phosphate. In Mycobacterium ulcerans (strain Agy99), this protein is Homoserine kinase.